Reading from the N-terminus, the 101-residue chain is Small ribosomal subunit protein uS14 (101 aa).

It belongs to the universal ribosomal protein uS14 family. Part of the 30S ribosomal subunit. Contacts proteins S3 and S10.

Its function is as follows. Binds 16S rRNA, required for the assembly of 30S particles and may also be responsible for determining the conformation of the 16S rRNA at the A site. This Erythrobacter litoralis (strain HTCC2594) protein is Small ribosomal subunit protein uS14.